The sequence spans 1235 residues: ATP-dependent helicase/nuclease subunit A (1235 aa).

Residues A12 to R482 form the UvrD-like helicase ATP-binding domain. A33–T40 contacts ATP. One can recognise a UvrD-like helicase C-terminal domain in the interval A509 to G800.

The protein belongs to the helicase family. AddA subfamily. In terms of assembly, heterodimer of AddA and AddB/RexB. Requires Mg(2+) as cofactor.

It catalyses the reaction Couples ATP hydrolysis with the unwinding of duplex DNA by translocating in the 3'-5' direction.. The catalysed reaction is ATP + H2O = ADP + phosphate + H(+). Functionally, the heterodimer acts as both an ATP-dependent DNA helicase and an ATP-dependent, dual-direction single-stranded exonuclease. Recognizes the chi site generating a DNA molecule suitable for the initiation of homologous recombination. The AddA nuclease domain is required for chi fragment generation; this subunit has the helicase and 3' -&gt; 5' nuclease activities. This chain is ATP-dependent helicase/nuclease subunit A, found in Listeria innocua serovar 6a (strain ATCC BAA-680 / CLIP 11262).